A 236-amino-acid chain; its full sequence is OPEP-2 protein (236 aa).

The polypeptide is OPEP-2 protein (OPEP-2) (Orgyia pseudotsugata (Douglas-fir tussock moth)).